The following is a 432-amino-acid chain: Adenylosuccinate synthetase (432 aa).

GTP-binding positions include 12 to 18 and 40 to 42; these read GDEGKGK and GHT. Residue aspartate 13 is the Proton acceptor of the active site. Residues aspartate 13 and glycine 40 each coordinate Mg(2+). IMP is bound by residues 13 to 16, 38 to 41, threonine 130, arginine 144, glutamine 225, threonine 240, and arginine 304; these read DEGK and NAGH. Histidine 41 functions as the Proton donor in the catalytic mechanism. 300–306 serves as a coordination point for substrate; that stretch reads ATTGRPR. Residues arginine 306, 332 to 334, and 414 to 416 contribute to the GTP site; these read KLD and SVG.

The protein belongs to the adenylosuccinate synthetase family. As to quaternary structure, homodimer. The cofactor is Mg(2+).

It localises to the cytoplasm. The catalysed reaction is IMP + L-aspartate + GTP = N(6)-(1,2-dicarboxyethyl)-AMP + GDP + phosphate + 2 H(+). It participates in purine metabolism; AMP biosynthesis via de novo pathway; AMP from IMP: step 1/2. In terms of biological role, plays an important role in the de novo pathway of purine nucleotide biosynthesis. Catalyzes the first committed step in the biosynthesis of AMP from IMP. The protein is Adenylosuccinate synthetase of Anaeromyxobacter sp. (strain K).